Here is a 1193-residue protein sequence, read N- to C-terminus: Major DNA-binding protein (1193 aa).

A Required for filament formation motif is present at residues 827 to 828; sequence FW. The segment at 1125–1145 is disordered; the sequence is AGGGPAGSAGGPESGGGAGAA. Residues 1170–1193 are required for nuclear localization; sequence PTAAALDGGGDGDECAFPAKRLRL.

The protein belongs to the herpesviridae major DNA-binding protein family. Homooligomers. Forms double-helical filaments necessary for the formation of replication compartments within the host nucleus. Interacts with the origin-binding protein. Interacts with the helicase primase complex; this interaction stimulates primer synthesis activity of the helicase-primase complex. Interacts with the DNA polymerase. Interacts with the alkaline exonuclease; this interaction increases its nuclease processivity.

The protein resides in the host nucleus. Plays several crucial roles in viral infection. Participates in the opening of the viral DNA origin to initiate replication by interacting with the origin-binding protein. May disrupt loops, hairpins and other secondary structures present on ssDNA to reduce and eliminate pausing of viral DNA polymerase at specific sites during elongation. Promotes viral DNA recombination by performing strand-transfer, characterized by the ability to transfer a DNA strand from a linear duplex to a complementary single-stranded DNA circle. Can also catalyze the renaturation of complementary single strands. Additionally, reorganizes the host cell nucleus, leading to the formation of prereplicative sites and replication compartments. This process is driven by the protein which can form double-helical filaments in the absence of DNA. This chain is Major DNA-binding protein, found in Tupaiid herpesvirus (strain 2) (TuHV-2).